The chain runs to 170 residues: Myosin regulatory light chain 2, skeletal muscle isoform (170 aa).

Alanine 2 is modified (n,N,N-trimethylalanine). Residues serine 16 and serine 17 each carry the phosphoserine modification. A phosphothreonine mark is found at threonine 26 and threonine 36. Residues 26–61 enclose the EF-hand 1 domain; it reads TQIQEFKEAFTVIDQNRDGIIDKEDLRDTFAAMGRL. The Ca(2+) site is built by aspartate 39, asparagine 41, aspartate 43, and aspartate 50. At serine 76 the chain carries Phosphoserine. 2 consecutive EF-hand domains span residues 96–131 and 132–167; these read DPEDVITGAFKVLDPEGKGTIKKKFLEELLTTQCDR and FSQEEIKNMWAAFPPDVGGNVDYKNICYVITHGDAK. Threonine 102 carries the post-translational modification Phosphothreonine.

As to quaternary structure, myosin is a hexamer of 2 heavy chains and 4 light chains.

Plays a role in muscle contraction. In Bos taurus (Bovine), this protein is Myosin regulatory light chain 2, skeletal muscle isoform.